A 366-amino-acid chain; its full sequence is MEGKTTMKGLAMLGIGRIGWIEKKIPECGPLDALVRPLALAPCTSDTHTVWAGAIGDRHDMILGHEAVGQIVKVGSLVKRLKVGDKVIVPAITPDWGEEESQRGYPMHSGGMLGGWKFSNFKDGVFSEVFHVNEADANLALLPRDIKPEDAVMLSDMVTTGFHGAELANIKLGDTVCVIGIGPVGLMSVAGANHLGAGRIFAVGSRKHCCDIALEYGATDIINYKNGDIVEQILKATDGKGVDKVVIAGGDVHTFAQAVKMIKPGSDIGNVNYLGEGDNIDIPRSEWGVGMGHKHIHGGLTPGGRVRMEKLASLISTGKLDTSKLITHRFEGLEKVEDALMLMKNKPADLIKPVVRIHYDDEDTLH.

Zn(2+)-binding residues include Cys-43, His-65, Glu-66, and Asp-156. Residues 181–184 (IGPV), 204–206 (GSR), Tyr-224, 271–273 (VNY), and Lys-346 each bind NADP(+).

It belongs to the zinc-containing alcohol dehydrogenase family. As to quaternary structure, homodimer. Requires Zn(2+) as cofactor.

The protein localises to the cytoplasm. The enzyme catalyses propan-2-ol + NADP(+) = acetone + NADPH + H(+). Its function is as follows. Alcohol dehydrogenase with a preference for medium chain secondary alcohols, such as 2-butanol and isopropanol. Has very low activity with primary alcohols, such as ethanol. Under physiological conditions, the enzyme reduces aldehydes and 2-ketones to produce secondary alcohols. Is also active with acetaldehyde and propionaldehyde. This chain is NADP-dependent isopropanol dehydrogenase, found in Entamoeba histolytica (strain ATCC 30459 / HM-1:IMSS / ABRM).